A 1045-amino-acid polypeptide reads, in one-letter code: E3 ubiquitin-protein ligase Topors (1045 aa).

Positions 1–35 (MGSQPPLGSPLSREEGEAPPPAPASEGRRRSRRVR) are disordered. Residues 1-195 (MGSQPPLGSP…RERNASVYSP (195 aa)) are E3 ubiquitin-protein ligase activity. The segment at 51-374 (ELAASAPARP…MAAFDQHANY (324 aa)) is required for DNA-binding. Glycyl lysine isopeptide (Lys-Gly) (interchain with G-Cter in SUMO2) cross-links involve residues lysine 73, lysine 76, lysine 83, and lysine 88. Serine 98 bears the Phosphoserine mark. An RING-type zinc finger spans residues 103 to 142 (CPICLDRFDNVSYLDRCLHKFCFRCVQEWSKNKAECPLCK). Lysine 159 participates in a covalent cross-link: Glycyl lysine isopeptide (Lys-Gly) (interchain with G-Cter in SUMO2). Position 194 is a phosphoserine (serine 194). A Glycyl lysine isopeptide (Lys-Gly) (interchain with G-Cter in SUMO2) cross-link involves residue lysine 249. Residues 437-574 (SLLNTSDSSD…STSLSSPRNL (138 aa)) are required for sumoylation and localization to discrete nuclear foci. Positions 437-654 (SLLNTSDSSD…RSRTRDSSWS (218 aa)) are interaction with SUMO1. Residues 442–475 (SDSSDEELVTGGATSQIQGVQTNDDLNNDSDDSS) form a disordered region. Residues 453–463 (GATSQIQGVQT) show a composition bias toward polar residues. An interaction with p53/TP53 region spans residues 456–731 (SQIQGVQTND…RRTLSRAHYS (276 aa)). The tract at residues 456 to 882 (SQIQGVQTND…GKATDTTKHH (427 aa)) is interaction with TOP1. Position 499 is a phosphoserine (serine 499). The disordered stretch occupies residues 511–692 (ETVKTQEQEQ…RSRNRDRYYL (182 aa)). A compositionally biased stretch (low complexity) spans 521 to 534 (SYSSGDSDVSRCSS). Basic and acidic residues predominate over residues 539–565 (LGKDEQINKGHCDSSTRIKSKKEEKRS). A Glycyl lysine isopeptide (Lys-Gly) (interchain with G-Cter in SUMO) cross-link involves residue lysine 560. The segment covering 566–578 (TSLSSPRNLNSSV) has biased composition (polar residues). Serine 585 carries the post-translational modification Phosphoserine. Composition is skewed to basic residues over residues 588–597 (NHRHRKRGRS), 613–630 (KNHR…KRSR), and 637–647 (PRGRRDKKRSR). Positions 654 to 669 (SRRSQTLSLSSESTSR) are enriched in low complexity. Lysine 701 participates in a covalent cross-link: Glycyl lysine isopeptide (Lys-Gly) (interchain with G-Cter in SUMO2). The segment at 713-936 (RDGYESSYRR…DNSGPQDPLQ (224 aa)) is disordered. A Phosphoserine; by PLK1 modification is found at serine 718. Basic residues predominate over residues 721–730 (RRRTLSRAHY). Residues 731–747 (SRQSSSPEFRVQSFSER) show a composition bias toward polar residues. Position 734 is a phosphoserine (serine 734). 2 stretches are compositionally biased toward basic and acidic residues: residues 755-766 (NHSERKYYYYER) and 816-825 (FASKAKDSHY). Glycyl lysine isopeptide (Lys-Gly) (interchain with G-Cter in SUMO2) cross-links involve residues lysine 819 and lysine 837. Residues 854-863 (KHKRRKRKTR) show a composition bias toward basic residues. Residues 854–917 (KHKRRKRKTR…ITIDSDSDKD (64 aa)) are interaction with UBE2I. Phosphoserine occurs at positions 864 and 866. A compositionally biased stretch (basic residues) spans 880–897 (KHHKKKKKKHKKKHKKHH). Phosphoserine occurs at positions 912, 914, and 1028. The span at 913–923 (DSDKDSEVKED) shows a compositional bias: basic and acidic residues.

In terms of assembly, interacts with PARK7/DJ-1. Interacts with TOP1. Interacts with p53/TP53; can both ubiquitinate and sumoylate p53/TP53. Interacts with the SUMO1 conjugating enzyme UBE2I. Interacts with SUMO1. Interacts with NKX3-1; polyubiquitinates NKX3-1 and induces its proteasomal degradation. Interacts with SIN3A; sumoylates SIN3A. Interacts with IKBKE; induced by DNA damage. In terms of processing, phosphorylation at Ser-98 regulates the E3 ubiquitin-protein ligase activity but not the SUMO1-protein ligase activity. Phosphorylation at Ser-718 increases the E3 ubiquitin-protein ligase activity versus the SUMO1-protein ligase activity resulting in increased p53/TP53 ubiquitination and degradation. Sumoylated. As to expression, expressed at highest levels in testis and at lower levels in adrenal gland, bone marrow, brain, colon, heart, kidney, liver, muscle, ovary, pancreas, placenta, prostate, skeletal muscle, skin, small intestine, spleen, stomach, testis, thymus, thyroid and uterus. Expressed in the alveolar epithelium of the lung. Expression is commonly decreased in colon adenocarcinomas and lung cancers.

It localises to the nucleus. Its subcellular location is the PML body. The enzyme catalyses S-ubiquitinyl-[E2 ubiquitin-conjugating enzyme]-L-cysteine + [acceptor protein]-L-lysine = [E2 ubiquitin-conjugating enzyme]-L-cysteine + N(6)-ubiquitinyl-[acceptor protein]-L-lysine.. Its function is as follows. Functions as an E3 ubiquitin-protein ligase and as an E3 SUMO1-protein ligase. Probable tumor suppressor involved in cell growth, cell proliferation and apoptosis that regulates p53/TP53 stability through ubiquitin-dependent degradation. May regulate chromatin modification through sumoylation of several chromatin modification-associated proteins. May be involved in DNA damage-induced cell death through IKBKE sumoylation. The sequence is that of E3 ubiquitin-protein ligase Topors (TOPORS) from Homo sapiens (Human).